The sequence spans 334 residues: DNA polymerase III subunit delta' (334 aa).

The DNA polymerase III holoenzyme complex contains at least 10 different subunits organized into 3 functionally essential subassemblies: the Pol III core, the beta sliding clamp processivity factor and the clamp-loading complex. The Pol III core (subunits alpha, epsilon and theta) contains the polymerase and the 3'-5' exonuclease proofreading activities. The polymerase is tethered to the template via the dimeric beta sliding clamp processivity factor. The clamp-loading complex (also called gamma complex) assembles the beta sliding clamp onto the primed template and plays a central role in the organization and communication at the replication fork. The clamp-loading complex contains delta, delta', psi and chi, and 3 copies of either or both of two different DnaX proteins, gamma and tau. The DNA replisome complex has a single clamp loader (3 tau and 1 each of delta, delta', psi and chi subunits) which binds 3 Pol III cores (1 core on the leading strand and 2 on the lagging strand) each with a beta sliding clamp dimer. Additional proteins in the replisome are other copies of gamma, psi and chi, Ssb, DNA helicase and RNA primase. The clamp loader hydrolyzes ATP to assemble the beta processivity factor onto the primed template and plays a central role in the organization and communication at the replication fork; the minimal complex to load the beta sliding clamp on DNA is delta, delta', gamma.

It carries out the reaction DNA(n) + a 2'-deoxyribonucleoside 5'-triphosphate = DNA(n+1) + diphosphate. Part of the beta sliding clamp loading complex, which hydrolyzes ATP to load the beta clamp onto primed DNA to form the DNA replication pre-initiation complex. DNA polymerase III is a complex, multichain enzyme responsible for most of the replicative synthesis in bacteria. This DNA polymerase also exhibits 3' to 5' exonuclease activity. The gamma complex (gamma(3),delta,delta') is thought to load beta dimers onto DNA by binding ATP which alters the complex's conformation so it can bind beta sliding clamp dimers and open them at one interface. Primed DNA is recognized, ATP is hydrolyzed releasing the gamma complex and closing the beta sliding clamp ring around the primed DNA. The sequence is that of DNA polymerase III subunit delta' (holB) from Escherichia coli (strain K12).